Here is a 186-residue protein sequence, read N- to C-terminus: Ribosome-recycling factor (186 aa).

The interval 140–163 (LKKAEKDGDIGQDEGRSLSERVQK) is disordered.

The protein belongs to the RRF family.

The protein localises to the cytoplasm. Functionally, responsible for the release of ribosomes from messenger RNA at the termination of protein biosynthesis. May increase the efficiency of translation by recycling ribosomes from one round of translation to another. This Rhizobium rhizogenes (strain K84 / ATCC BAA-868) (Agrobacterium radiobacter) protein is Ribosome-recycling factor.